A 247-amino-acid chain; its full sequence is Mast cell protease 8 (247 aa).

The first 19 residues, Met-1 to Gly-19, serve as a signal peptide directing secretion. Residue Glu-20 is a propeptide, activation peptide. The 222-residue stretch at Ile-21 to Lys-242 folds into the Peptidase S1 domain. A glycan (N-linked (GlcNAc...) asparagine) is linked at Asn-41. The cysteines at positions 49 and 65 are disulfide-linked. Catalysis depends on His-64, which acts as the Charge relay system. Residues Asn-71 and Asn-101 are each glycosylated (N-linked (GlcNAc...) asparagine). Asp-107 acts as the Charge relay system in catalysis. Cystine bridges form between Cys-141-Cys-206 and Cys-171-Cys-185. Residues Asn-151 and Asn-179 are each glycosylated (N-linked (GlcNAc...) asparagine). Ser-200 (charge relay system) is an active-site residue.

It belongs to the peptidase S1 family. Granzyme subfamily.

It is found in the secreted. Its subcellular location is the cytoplasmic granule. The chain is Mast cell protease 8 (Mcpt8) from Mus musculus (Mouse).